The sequence spans 251 residues: Guanine nucleotide-binding protein subunit gamma 3 (251 aa).

The segment covering 1-10 (MSAPSGGGEG) has biased composition (gly residues). Positions 1-44 (MSAPSGGGEGGGKESAAGGVSSSSLAPSSLPPPRPKSPPEYPDL) are disordered. A compositionally biased stretch (low complexity) spans 14-28 (ESAAGGVSSSSLAPS). Residues 29–41 (SLPPPRPKSPPEY) are compositionally biased toward pro residues. One can recognise a G protein gamma domain in the interval 46 to 126 (GKRREAARVQ…LSLVSFCCCC (81 aa)). Cys248 carries the cysteine methyl ester modification. Cys248 is lipidated: S-farnesyl cysteine. Positions 249-251 (LAF) are cleaved as a propeptide — removed in mature form.

G proteins are composed of 3 units, alpha, beta and gamma. Expressed in flowers and siliques.

Functionally, guanine nucleotide-binding proteins (G proteins) are involved as a modulator or transducer in various transmembrane signaling systems. The beta and gamma chains are required for the GTPase activity, for replacement of GDP by GTP, and for G protein-effector interaction. The polypeptide is Guanine nucleotide-binding protein subunit gamma 3 (GG3) (Arabidopsis thaliana (Mouse-ear cress)).